Consider the following 175-residue polypeptide: Large ribosomal subunit protein uL10 (175 aa).

The protein belongs to the universal ribosomal protein uL10 family. As to quaternary structure, part of the ribosomal stalk of the 50S ribosomal subunit. The N-terminus interacts with L11 and the large rRNA to form the base of the stalk. The C-terminus forms an elongated spine to which L12 dimers bind in a sequential fashion forming a multimeric L10(L12)X complex.

Functionally, forms part of the ribosomal stalk, playing a central role in the interaction of the ribosome with GTP-bound translation factors. In Psychrobacter arcticus (strain DSM 17307 / VKM B-2377 / 273-4), this protein is Large ribosomal subunit protein uL10.